A 260-amino-acid chain; its full sequence is tRNA1(Val) (adenine(37)-N6)-methyltransferase (260 aa).

Belongs to the methyltransferase superfamily. tRNA (adenine-N(6)-)-methyltransferase family.

The protein resides in the cytoplasm. It catalyses the reaction adenosine(37) in tRNA1(Val) + S-adenosyl-L-methionine = N(6)-methyladenosine(37) in tRNA1(Val) + S-adenosyl-L-homocysteine + H(+). Functionally, specifically methylates the adenine in position 37 of tRNA(1)(Val) (anticodon cmo5UAC). The polypeptide is tRNA1(Val) (adenine(37)-N6)-methyltransferase (Serratia proteamaculans (strain 568)).